We begin with the raw amino-acid sequence, 173 residues long: Globin-like host-protective antigen (173 aa).

The first 15 residues, 1–15 (MRFLLLAAFVAYAYA), serve as a signal peptide directing secretion. The region spanning 25-166 (ALSALDVVPL…FNDEAQKQLA (142 aa)) is the Globin domain. His-114 provides a ligand contact to heme b.

This sequence belongs to the globin family.

Its subcellular location is the secreted. The protein resides in the extracellular space. Functionally, may be a globin and may play a role in oxygen transport. The polypeptide is Globin-like host-protective antigen (Trichostrongylus colubriformis (Black scour worm)).